We begin with the raw amino-acid sequence, 502 residues long: Probable glycine dehydrogenase (decarboxylating) subunit 2 (502 aa).

Residue Lys273 is modified to N6-(pyridoxal phosphate)lysine.

Belongs to the GcvP family. C-terminal subunit subfamily. The glycine cleavage system is composed of four proteins: P, T, L and H. In this organism, the P 'protein' is a heterodimer of two subunits. Requires pyridoxal 5'-phosphate as cofactor.

The enzyme catalyses N(6)-[(R)-lipoyl]-L-lysyl-[glycine-cleavage complex H protein] + glycine + H(+) = N(6)-[(R)-S(8)-aminomethyldihydrolipoyl]-L-lysyl-[glycine-cleavage complex H protein] + CO2. Its function is as follows. The glycine cleavage system catalyzes the degradation of glycine. The P protein binds the alpha-amino group of glycine through its pyridoxal phosphate cofactor; CO(2) is released and the remaining methylamine moiety is then transferred to the lipoamide cofactor of the H protein. In Thermococcus gammatolerans (strain DSM 15229 / JCM 11827 / EJ3), this protein is Probable glycine dehydrogenase (decarboxylating) subunit 2.